Reading from the N-terminus, the 823-residue chain is Polyadenylation and cleavage factor homolog 11 (823 aa).

The region spanning 3–135 is the CID domain; sequence SVESAARDYR…ELDMKINKLD (133 aa). 5 disordered regions span residues 142 to 176, 188 to 301, 340 to 395, 570 to 643, and 728 to 755; these read NPQTGRALRDDPQVMAPSQSRPAGNATSPAASTST, SSTP…KTLK, SSAP…LPAP, LPAP…EKRS, and WLTPRASDETNEQEADKPEEPLPGVASS. Polar residues-rich tracts occupy residues 157–176 and 188–198; these read APSQSRPAGNATSPAASTST and SSTPGAASASK. Residues 200 to 226 are compositionally biased toward basic and acidic residues; that stretch reads VVEKTKSPGTVNKEKQVKKEPKQDPLD. Composition is skewed to low complexity over residues 227-242 and 342-353; these read KLLPSSSASKTSSSPA and APPFQHPQQHHP. The span at 374-390 shows a compositional bias: pro residues; that stretch reads PQDPAPIVPVQAPPPQQ. The segment covering 571–581 has biased composition (low complexity); that stretch reads PAPARSPSSPR. Residues 609–624 are compositionally biased toward polar residues; that stretch reads QPQQNARWGGANKQQN.

The chain is Polyadenylation and cleavage factor homolog 11 (pcf-11) from Caenorhabditis elegans.